The chain runs to 276 residues: Large ribosomal subunit protein uL2 (276 aa).

A disordered region spans residues 203 to 276 (NVSSGKAGRT…SDKFIVKRRK (74 aa)). Basic residues predominate over residues 210–220 (GRTRWLGRRPQ). Positions 265 to 276 (KPSDKFIVKRRK) are enriched in basic and acidic residues.

The protein belongs to the universal ribosomal protein uL2 family. As to quaternary structure, part of the 50S ribosomal subunit. Forms a bridge to the 30S subunit in the 70S ribosome.

In terms of biological role, one of the primary rRNA binding proteins. Required for association of the 30S and 50S subunits to form the 70S ribosome, for tRNA binding and peptide bond formation. It has been suggested to have peptidyltransferase activity; this is somewhat controversial. Makes several contacts with the 16S rRNA in the 70S ribosome. The polypeptide is Large ribosomal subunit protein uL2 (Coprothermobacter proteolyticus (strain ATCC 35245 / DSM 5265 / OCM 4 / BT)).